Here is a 105-residue protein sequence, read N- to C-terminus: Large ribosomal subunit protein bL21 (105 aa).

This sequence belongs to the bacterial ribosomal protein bL21 family. As to quaternary structure, part of the 50S ribosomal subunit. Contacts protein L20.

Its function is as follows. This protein binds to 23S rRNA in the presence of protein L20. The polypeptide is Large ribosomal subunit protein bL21 (Rhizobium etli (strain CIAT 652)).